We begin with the raw amino-acid sequence, 163 residues long: RxLR effector protein PITG_13625 (163 aa).

Residues 1 to 23 (MKVSKAIVALAALCMALLAPAAG) form the signal peptide. The RxLR-dEER signature appears at 37 to 52 (RHLRQESAELATTPEE).

The protein belongs to the RxLR effector family.

Its subcellular location is the secreted. The protein localises to the host cell membrane. In terms of biological role, effector that enhances P.infestans colonization of Nicotiana benthamiana leaves. In Phytophthora infestans (strain T30-4) (Potato late blight agent), this protein is RxLR effector protein PITG_13625.